The following is a 686-amino-acid chain: Glycine--tRNA ligase beta subunit (686 aa).

This sequence belongs to the class-II aminoacyl-tRNA synthetase family. Tetramer of two alpha and two beta subunits.

It is found in the cytoplasm. It catalyses the reaction tRNA(Gly) + glycine + ATP = glycyl-tRNA(Gly) + AMP + diphosphate. The protein is Glycine--tRNA ligase beta subunit of Geobacter metallireducens (strain ATCC 53774 / DSM 7210 / GS-15).